A 134-amino-acid chain; its full sequence is MSTTFCSSVSMQATSLAATTRISFQKPALVSTTNLSFNLRRSIPTRFSISCAAKPETVEKVSKIVKKQLSLKDDQKVVAETKFADLGADSLDTVEIVMGLEEEFDIEMAEEKAQKIATVEEAAELIEELVQLKK.

A chloroplast-targeting transit peptide spans 1–51; sequence MSTTFCSSVSMQATSLAATTRISFQKPALVSTTNLSFNLRRSIPTRFSISC. Positions 55–130 constitute a Carrier domain; it reads PETVEKVSKI…EAAELIEELV (76 aa). The residue at position 90 (Ser-90) is an O-(pantetheine 4'-phosphoryl)serine.

This sequence belongs to the acyl carrier protein (ACP) family. Post-translationally, 4'-phosphopantetheine is transferred from CoA to a specific serine of apo-ACP by acpS. This modification is essential for activity because fatty acids are bound in thioester linkage to the sulfhydryl of the prosthetic group.

Its subcellular location is the plastid. The protein localises to the chloroplast. It participates in lipid metabolism; fatty acid biosynthesis. Carrier of the growing fatty acid chain in fatty acid biosynthesis. This chain is Acyl carrier protein SF2, chloroplastic (Acl1.1), found in Brassica campestris (Field mustard).